The primary structure comprises 1164 residues: Integrin alpha-5 (1164 aa).

The segment covering 1 to 14 (MREEGGGSREKEGE) has biased composition (basic and acidic residues). Residues 1–119 (MREEGGGSRE…MGSRTPGSPL (119 aa)) are disordered. Low complexity predominate over residues 81 to 90 (LLPALSHSPL). Residues 156-221 (NLDAEAPAVL…CPWGTSPAQC (66 aa)) form an FG-GAP 1 repeat. N197 carries N-linked (GlcNAc...) asparagine glycosylation. C212 and C221 are disulfide-bonded. Residue S240 is modified to Phosphoserine. FG-GAP repeat units follow at residues 241 to 301 (SEGE…QILE), 306 to 358 (RSDF…AESY), 372 to 424 (QTRQ…GSDI), 425 to 490 (RSLY…GMEP), 491 to 550 (TPTL…GLAS), and 554 to 617 (QVLL…IFPA). C269 and C289 are joined by a disulfide. N-linked (GlcNAc...) asparagine glycosylation occurs at N295. C305 and C318 are disulfide-bonded. A protein is bound by residues Q375 and D382. E393, S395, D397, and D401 together coordinate Ca(2+). Residues N410, N420, and N429 are each glycosylated (N-linked (GlcNAc...) asparagine). D447, N449, D451, L453, D455, D514, D516, D518, Y520, D522, D578, D580, N582, Y584, and D586 together coordinate Ca(2+). A disulfide bridge links C626 with C635. N-linked (GlcNAc...) asparagine glycosylation is found at N637, N643, N706, and N722. Cysteines 641 and 697 form a disulfide. Cysteines 758 and 764 form a disulfide. N-linked (GlcNAc...) asparagine glycans are attached at residues N788, N825, N837, N886, and N982. C831 and C844 form a disulfide bridge. Intrachain disulfides connect C962–C1072, C983–C1036, and C1026–C1031. Residues 983–1022 (CTTSHPPNPEGLELDPEGSQHHRLQRRDVPGRSPASSGPQ) are disordered. The helical transmembrane segment at 1114 to 1134 (LWIIILAILIGLLLLGLLIYI) threads the bilayer. At 1135 to 1164 (LYKLGFFKRSLPYGTAMEKAQLKPPATSDA) the chain is on the cytoplasmic side. The segment at 1136-1143 (YKLGFFKR) is interaction with HPS5. A GFFKR motif motif is present at residues 1139–1143 (GFFKR).

The protein belongs to the integrin alpha chain family. In terms of assembly, heterodimer of an alpha and a beta subunit. The alpha subunit is composed of a heavy and a light chain linked by a disulfide bond. Alpha-5 associates with beta-1. Interacts with NISCH. Interacts with HPS5. Interacts with RAB21 and COMP. Interacts with CIB1. ITGA5:ITGB1 interacts with CCN3. ITGA5:ITGB1 interacts with FBN1. ITGA5:ITGB1 interacts with IL1B. ITGA5:ITGB1 interacts with ACE2. ITGA5:ITGB1 interacts with SELP. Interacts with ANGPT2. ITGA5:ITGB1 interacts with IGFBP2. ITGA5:ITGB1 interacts with IGFBP1. In terms of processing, proteolytic cleavage by PCSK5 mediates activation of the precursor.

It is found in the cell membrane. The protein resides in the cell junction. Its subcellular location is the focal adhesion. Functionally, integrin alpha-5/beta-1 (ITGA5:ITGB1) is a receptor for fibronectin and fibrinogen. It recognizes the sequence R-G-D in its ligands. ITGA5:ITGB1 binds to PLA2G2A via a site (site 2) which is distinct from the classical ligand-binding site (site 1) and this induces integrin conformational changes and enhanced ligand binding to site 1. ITGA5:ITGB1 acts as a receptor for fibrillin-1 (FBN1) and mediates R-G-D-dependent cell adhesion to FBN1. ITGA5:ITGB1 acts as a receptor for fibronectin (FN1) and mediates R-G-D-dependent cell adhesion to FN1. ITGA5:ITGB1 is a receptor for IL1B and binding is essential for IL1B signaling. ITGA5:ITGB3 is a receptor for soluble CD40LG and is required for CD40/CD40LG signaling. This chain is Integrin alpha-5 (ITGA5), found in Bos taurus (Bovine).